A 321-amino-acid chain; its full sequence is uncharacterized protein (321 aa).

The interval 157-220 is disordered; sequence TLEQPIEEDF…EGAEEDSHEH (64 aa). Acidic residues predominate over residues 161–214; that stretch reads PIEEDFDEQDENDQNERDEDDAEEQEEDEVEEEEEEQQEEEEGENDEELTEGAE. Residues 167 to 212 adopt a coiled-coil conformation; the sequence is DEQDENDQNERDEDDAEEQEEDEVEEEEEEQQEEEEGENDEELTEG.

This is an uncharacterized protein from Dictyostelium discoideum (Social amoeba).